Consider the following 266-residue polypeptide: 15-hydroxyprostaglandin dehydrogenase [NAD(+)] (266 aa).

Residues 12–20 (GAAQGIGRA), 36–37 (DW), 63–65 (CDV), and N91 contribute to the NAD(+) site. 2 residues coordinate substrate: S138 and Q148. The Proton acceptor role is filled by Y151. NAD(+)-binding positions include 151–155 (YCASK) and 186–188 (VNT).

It belongs to the short-chain dehydrogenases/reductases (SDR) family. As to quaternary structure, homodimer. In terms of tissue distribution, detected in colon epithelium (at protein level).

It localises to the cytoplasm. It catalyses the reaction prostaglandin E2 + NAD(+) = 15-oxoprostaglandin E2 + NADH + H(+). The catalysed reaction is (15S)-hydroxy-(5Z,8Z,11Z,13E)-eicosatetraenoate + NAD(+) = 15-oxo-(5Z,8Z,11Z,13E)-eicosatetraenoate + NADH + H(+). It carries out the reaction (11R)-hydroxy-(5Z,8Z,12E,14Z)-eicosatetraenoate + NAD(+) = 11-oxo-(5Z,8Z,12E,14Z)-eicosatetraenoate + NADH + H(+). The enzyme catalyses lipoxin A4 + NAD(+) = 15-oxo-(5S,6R)-dihydroxy-(7E,9E,11Z,13E)-eicosatetraenoate + NADH + H(+). It catalyses the reaction 15-oxo-(5S,6R)-dihydroxy-(7E,9E,11Z)-eicosatrienoate + NADH + H(+) = (5S,6R,15S)-trihydroxy-(7E,9E,11Z)-eicosatrienoate + NAD(+). The catalysed reaction is prostaglandin A1 + NAD(+) = 15-oxo-prostaglandin A1 + NADH + H(+). It carries out the reaction prostaglandin E1 + NAD(+) = 15-oxoprostaglandin E1 + NADH + H(+). The enzyme catalyses 14-hydroxy-(4Z,7Z,10Z,12E,16Z,19Z)-docosahexaenoate + NAD(+) = 14-oxo-(4Z,7Z,10Z,12E,16Z,19Z)-docosahexaenoate + NADH + H(+). It catalyses the reaction resolvin E1 + NAD(+) = 18-oxo-resolvin E1 + NADH + H(+). The catalysed reaction is resolvin D1 + NAD(+) = 8-oxoresolvin D1 + NADH + H(+). It carries out the reaction resolvin D1 + NAD(+) = 17-oxoresolvin D1 + NADH + H(+). The enzyme catalyses resolvin D2 + NAD(+) = 7-oxoresolvin D2 + NADH + H(+). It catalyses the reaction resolvin D2 + NAD(+) = 16-oxoresolvin D2 + NADH + H(+). Catalyzes the NAD-dependent dehydrogenation (oxidation) of a broad array of hydroxylated polyunsaturated fatty acids (mainly eicosanoids and docosanoids, including prostaglandins, lipoxins and resolvins), yielding their corresponding keto (oxo) metabolites. Decreases the levels of the pro-proliferative prostaglandins such as prostaglandin E2 (whose activity is increased in cancer because of an increase in the expression of cyclooxygenase 2) and generates oxo-fatty acid products that can profoundly influence cell function by abrogating pro-inflammatory cytokine expression. Converts resolvins E1, D1 and D2 to their oxo products, which represents a mode of resolvin inactivation. Resolvin E1 plays important roles during the resolution phase of acute inflammation, while resolvins D1 and D2 have a unique role in obesity-induced adipose inflammation. This Homo sapiens (Human) protein is 15-hydroxyprostaglandin dehydrogenase [NAD(+)].